A 357-amino-acid chain; its full sequence is 3-isopropylmalate dehydrogenase (357 aa).

Residue 76–89 (GPKWDALDSNIRPE) participates in NAD(+) binding. Substrate contacts are provided by Arg-96, Arg-106, Arg-134, and Asp-224. Asp-224, Asp-248, and Asp-252 together coordinate Mg(2+). 282–294 (GSAPDIAGQGVAN) is an NAD(+) binding site.

It belongs to the isocitrate and isopropylmalate dehydrogenases family. LeuB type 1 subfamily. As to quaternary structure, homodimer. The cofactor is Mg(2+). Mn(2+) is required as a cofactor.

It is found in the cytoplasm. The enzyme catalyses (2R,3S)-3-isopropylmalate + NAD(+) = 4-methyl-2-oxopentanoate + CO2 + NADH. The protein operates within amino-acid biosynthesis; L-leucine biosynthesis; L-leucine from 3-methyl-2-oxobutanoate: step 3/4. Functionally, catalyzes the oxidation of 3-carboxy-2-hydroxy-4-methylpentanoate (3-isopropylmalate) to 3-carboxy-4-methyl-2-oxopentanoate. The product decarboxylates to 4-methyl-2 oxopentanoate. The polypeptide is 3-isopropylmalate dehydrogenase (Saccharophagus degradans (strain 2-40 / ATCC 43961 / DSM 17024)).